The sequence spans 354 residues: Elongation factor Ts (354 aa).

Positions 81 to 84 (TDFV) are involved in Mg(2+) ion dislocation from EF-Tu.

This sequence belongs to the EF-Ts family.

The protein resides in the cytoplasm. Its function is as follows. Associates with the EF-Tu.GDP complex and induces the exchange of GDP to GTP. It remains bound to the aminoacyl-tRNA.EF-Tu.GTP complex up to the GTP hydrolysis stage on the ribosome. In Campylobacter fetus subsp. fetus (strain 82-40), this protein is Elongation factor Ts.